Here is a 156-residue protein sequence, read N- to C-terminus: Putative F-box protein R637 (156 aa).

The F-box domain maps to 4–51 (HISSLLNEDCVRHIMCFLTDKEKGKFCLTCRDLLYLIKDVKFNDPVNK).

This chain is Putative F-box protein R637, found in Acanthamoeba polyphaga mimivirus (APMV).